The sequence spans 333 residues: Eukaryotic translation initiation factor 2 subunit 2 (333 aa).

Disordered stretches follow at residues 1–120 (MSGD…LDIM) and 139–165 (ILEK…QTGP). An N-acetylserine modification is found at Ser-2. Phosphoserine is present on Ser-2. At Ser-13 the chain carries Phosphoserine; by PKC; in vitro. Residues 13 to 22 (SKKKKKKKKP) show a composition bias toward basic residues. Position 36 is a phosphothreonine (Thr-36). Basic and acidic residues predominate over residues 40 to 51 (ETKEVEPEPTED). The residue at position 67 (Ser-67) is a Phosphoserine; by CK2. A compositionally biased stretch (basic and acidic residues) spans 96–105 (EGVKDLKIEN). Lys-102 participates in a covalent cross-link: Glycyl lysine isopeptide (Lys-Gly) (interchain with G-Cter in SUMO2). 2 stretches are compositionally biased toward acidic residues: residues 106-118 (DVQE…DDLD) and 139-149 (ILEKDEALEDE). A Phosphoserine modification is found at Ser-158. Ser-218 carries the phosphoserine; by PKA; in vitro modification. An N6-acetyllysine mark is found at Lys-265 and Lys-293. The segment at 281–305 (CHTCRSPDTILQKDTRLYFLQCETC) adopts a C4-type zinc-finger fold.

It belongs to the eIF-2-beta/eIF-5 family. In terms of assembly, eukaryotic translation initiation factor 2 eIF2 is a heterotrimeric complex composed of an alpha (EIF2S1), a beta (EIF2S2) and a gamma (EIF2S3) chain. eIF2 is member of the 43S pre-initiation complex (43S PIC). eIF2 forms a complex with at least CELF1/CUGBP1, CALR, CALR3, EIF2S1, EIF2S2, HSP90B1 and HSPA5. Interacts with BZW2/5MP1. Interacts with EIF5. The N-terminus is blocked.

The protein localises to the cytoplasm. It is found in the cytosol. In terms of biological role, component of the eIF2 complex that functions in the early steps of protein synthesis by forming a ternary complex with GTP and initiator tRNA. This complex binds to a 40S ribosomal subunit, followed by mRNA binding to form the 43S pre-initiation complex (43S PIC). Junction of the 60S ribosomal subunit to form the 80S initiation complex is preceded by hydrolysis of the GTP bound to eIF2 and release of an eIF2-GDP binary complex. In order for eIF2 to recycle and catalyze another round of initiation, the GDP bound to eIF2 must exchange with GTP by way of a reaction catalyzed by eIF2B. The polypeptide is Eukaryotic translation initiation factor 2 subunit 2 (EIF2S2) (Oryctolagus cuniculus (Rabbit)).